A 350-amino-acid chain; its full sequence is Probable dual-specificity RNA methyltransferase RlmN (350 aa).

Glu-91 functions as the Proton acceptor in the catalytic mechanism. Residues 97–327 (YHHGNSVCIS…VTIRREMGRD (231 aa)) form the Radical SAM core domain. A disulfide bridge connects residues Cys-104 and Cys-332. 3 residues coordinate [4Fe-4S] cluster: Cys-111, Cys-115, and Cys-118. S-adenosyl-L-methionine-binding positions include 158 to 159 (GE), Ser-190, 213 to 215 (SLH), and Asn-289. The active-site S-methylcysteine intermediate is Cys-332.

This sequence belongs to the radical SAM superfamily. RlmN family. [4Fe-4S] cluster is required as a cofactor.

It localises to the cytoplasm. The catalysed reaction is adenosine(2503) in 23S rRNA + 2 reduced [2Fe-2S]-[ferredoxin] + 2 S-adenosyl-L-methionine = 2-methyladenosine(2503) in 23S rRNA + 5'-deoxyadenosine + L-methionine + 2 oxidized [2Fe-2S]-[ferredoxin] + S-adenosyl-L-homocysteine. It catalyses the reaction adenosine(37) in tRNA + 2 reduced [2Fe-2S]-[ferredoxin] + 2 S-adenosyl-L-methionine = 2-methyladenosine(37) in tRNA + 5'-deoxyadenosine + L-methionine + 2 oxidized [2Fe-2S]-[ferredoxin] + S-adenosyl-L-homocysteine. In terms of biological role, specifically methylates position 2 of adenine 2503 in 23S rRNA and position 2 of adenine 37 in tRNAs. The chain is Probable dual-specificity RNA methyltransferase RlmN from Lachnospira eligens (strain ATCC 27750 / DSM 3376 / VPI C15-48 / C15-B4) (Eubacterium eligens).